We begin with the raw amino-acid sequence, 121 residues long: Large ribosomal subunit protein uL14c (121 aa).

Belongs to the universal ribosomal protein uL14 family. Part of the 50S ribosomal subunit.

It localises to the plastid. The protein resides in the chloroplast. Its function is as follows. Binds to 23S rRNA. This chain is Large ribosomal subunit protein uL14c, found in Phaeodactylum tricornutum (strain CCAP 1055/1).